The following is a 375-amino-acid chain: 4,4'-diaponeurosporenoate glycosyltransferase (375 aa).

4 helical membrane passes run 7–23 (LLHASTGLSLISGYLMY), 112–132 (ACYLGASYTVSDILIFMDADV), 280–300 (IMMLIILWMVGCITSFSGLAL), and 333–353 (FSILFLAINSILFLVFILVYI).

This sequence belongs to the glycosyltransferase 2 family. CrtQ subfamily.

It localises to the cell membrane. The protein operates within carotenoid biosynthesis; staphyloxanthin biosynthesis; staphyloxanthin from farnesyl diphosphate: step 4/5. Functionally, catalyzes the glycosylation of 4,4'-diaponeurosporenoate, i.e. the esterification of glucose at the C1'' position with the carboxyl group of 4,4'-diaponeurosporenic acid, to form glycosyl-4,4'-diaponeurosporenoate. This is a step in the biosynthesis of staphyloxanthin, an orange pigment present in most staphylococci strains. This is 4,4'-diaponeurosporenoate glycosyltransferase (crtQ) from Staphylococcus haemolyticus (strain JCSC1435).